Consider the following 543-residue polypeptide: Type I restriction enzyme MpnII methylase subunit (543 aa).

S-adenosyl-L-methionine-binding positions include 208–213 (EFFTPQ), 240–242 (SGS), and glutamate 265.

The protein belongs to the N(4)/N(6)-methyltransferase family. In terms of assembly, the methyltransferase is composed of M and S polypeptides.

The catalysed reaction is a 2'-deoxyadenosine in DNA + S-adenosyl-L-methionine = an N(6)-methyl-2'-deoxyadenosine in DNA + S-adenosyl-L-homocysteine + H(+). Functionally, the subtype gamma methyltransferase (M) subunit of a type I restriction enzyme. The M and S subunits together form a methyltransferase (MTase) that probably methylates A-2 on the top strand and A-3 on the bottom strand of the sequence 5'-GAN(7)TAY-3'. As the bacterial DNA is methylated on this sequence and this is the only type I methylase in the genome, it is probably responsible for all of the methylation on this site in the genome. The R subunit has multiple frameshifts and is probably not expressed in this bacteria. The sequence is that of Type I restriction enzyme MpnII methylase subunit from Mycoplasma pneumoniae (strain ATCC 29342 / M129 / Subtype 1) (Mycoplasmoides pneumoniae).